A 189-amino-acid chain; its full sequence is Probable chorismate pyruvate-lyase (189 aa).

Residues Arg74, Leu113, and Glu175 each coordinate substrate.

Belongs to the UbiC family.

It is found in the cytoplasm. It carries out the reaction chorismate = 4-hydroxybenzoate + pyruvate. The protein operates within cofactor biosynthesis; ubiquinone biosynthesis. Its function is as follows. Removes the pyruvyl group from chorismate, with concomitant aromatization of the ring, to provide 4-hydroxybenzoate (4HB) for the ubiquinone pathway. The protein is Probable chorismate pyruvate-lyase of Azoarcus sp. (strain BH72).